The sequence spans 478 residues: Dihydrolipoyl dehydrogenase (478 aa).

FAD is bound by residues 34–49 (EKYIGKEGKVALGGTC), Lys-58, and Gly-122. Cys-49 and Cys-54 are disulfide-bonded. NAD(+) is bound by residues 188 to 192 (GAGVI), Glu-211, Val-245, and 276 to 279 (AVGR). FAD is bound by residues Asp-319 and Ala-327. Residue His-451 is the Proton acceptor of the active site.

It belongs to the class-I pyridine nucleotide-disulfide oxidoreductase family. As to quaternary structure, homodimer. The cofactor is FAD.

The protein resides in the cytoplasm. The enzyme catalyses N(6)-[(R)-dihydrolipoyl]-L-lysyl-[protein] + NAD(+) = N(6)-[(R)-lipoyl]-L-lysyl-[protein] + NADH + H(+). Its function is as follows. The branched-chain alpha-keto dehydrogenase complex catalyzes the overall conversion of alpha-keto acids to acyl-CoA and CO(2). It contains multiple copies of 3 enzymatic components: branched-chain alpha-keto acid decarboxylase (E1), lipoamide acyltransferase (E2) and lipoamide dehydrogenase (E3). This chain is Dihydrolipoyl dehydrogenase (lpd), found in Pseudomonas fluorescens.